We begin with the raw amino-acid sequence, 63 residues long: uncharacterized protein (63 aa).

The helical transmembrane segment at 15–37 (ISHCHLPLSPATAIAIIICFRIV) threads the bilayer.

It is found in the membrane. This is an uncharacterized protein from Saccharomyces cerevisiae (strain ATCC 204508 / S288c) (Baker's yeast).